The chain runs to 358 residues: Isopentenyl-diphosphate delta-isomerase (358 aa).

12 to 13 (RK) provides a ligand contact to substrate. Residues 69–71 (AMT), Ser99, and Asn128 contribute to the FMN site. Gln158 contributes to the substrate binding site. Glu159 serves as a coordination point for Mg(2+). Residues Lys190, Thr220, 267-269 (GIR), and 288-289 (AG) each bind FMN.

This sequence belongs to the IPP isomerase type 2 family. As to quaternary structure, homooctamer. Dimer of tetramers. It depends on FMN as a cofactor. Requires NADPH as cofactor. The cofactor is Mg(2+).

It localises to the cytoplasm. It catalyses the reaction isopentenyl diphosphate = dimethylallyl diphosphate. Functionally, involved in the biosynthesis of isoprenoids. Catalyzes the 1,3-allylic rearrangement of the homoallylic substrate isopentenyl (IPP) to its allylic isomer, dimethylallyl diphosphate (DMAPP). In Listeria monocytogenes serovar 1/2a (strain ATCC BAA-679 / EGD-e), this protein is Isopentenyl-diphosphate delta-isomerase.